Reading from the N-terminus, the 492-residue chain is GTPase Der (492 aa).

The EngA-type G 1 domain maps to 3–166 (PVIALVGRPN…AVLGIFPKDA (164 aa)). GTP contacts are provided by residues 9 to 16 (GRPNVGKS), 56 to 60 (DTGGI), and 118 to 121 (NKVD). Positions 166 to 190 (AGEPEEGAEAEEEVQEGQEAKRIPG) are disordered. Over residues 168–181 (EPEEGAEAEEEVQE) the composition is skewed to acidic residues. The EngA-type G 2 domain maps to 197-370 (IKLAIIGRPN…SVQAAFHSAV (174 aa)). GTP-binding positions include 203–210 (GRPNVGKS), 250–254 (DTAGV), and 315–318 (NKWD). Positions 371-455 (TRWPTSRLTQ…PIRIEYKGGE (85 aa)) constitute a KH-like domain. Positions 453–492 (GGENPYEGNKNKLTDRQVNKKRRLMSHHKKAEKKRKDKRK) are disordered. Basic and acidic residues predominate over residues 461–470 (NKNKLTDRQV). Basic residues predominate over residues 471-492 (NKKRRLMSHHKKAEKKRKDKRK).

This sequence belongs to the TRAFAC class TrmE-Era-EngA-EngB-Septin-like GTPase superfamily. EngA (Der) GTPase family. In terms of assembly, associates with the 50S ribosomal subunit.

GTPase that plays an essential role in the late steps of ribosome biogenesis. The sequence is that of GTPase Der from Ectopseudomonas mendocina (strain ymp) (Pseudomonas mendocina).